We begin with the raw amino-acid sequence, 179 residues long: Large ribosomal subunit protein uL5 (179 aa).

This sequence belongs to the universal ribosomal protein uL5 family. Part of the 50S ribosomal subunit; part of the 5S rRNA/L5/L18/L25 subcomplex. Contacts the 5S rRNA and the P site tRNA. Forms a bridge to the 30S subunit in the 70S ribosome.

Functionally, this is one of the proteins that bind and probably mediate the attachment of the 5S RNA into the large ribosomal subunit, where it forms part of the central protuberance. In the 70S ribosome it contacts protein S13 of the 30S subunit (bridge B1b), connecting the 2 subunits; this bridge is implicated in subunit movement. Contacts the P site tRNA; the 5S rRNA and some of its associated proteins might help stabilize positioning of ribosome-bound tRNAs. The sequence is that of Large ribosomal subunit protein uL5 from Buchnera aphidicola subsp. Baizongia pistaciae (strain Bp).